We begin with the raw amino-acid sequence, 258 residues long: Membrane-associated protein Vipp1 (258 aa).

Positions 217–258 are disordered; that stretch reads MLPPATPVTQAQLPPQQETTPAKSNEVVDAELDSLRKQLDQL. Polar residues predominate over residues 223–239; sequence PVTQAQLPPQQETTPAK. Over residues 249–258 the composition is skewed to basic and acidic residues; sequence DSLRKQLDQL.

Belongs to the PspA/Vipp/IM30 family. Polymerizes to form rings, filaments and ribbons. Rings are formed by stacked rungs that tilt to give a dome-shaped curvature. Rings form with symmetries ranging from C11 (55 subunits) to C17 (119 subunits).

The protein localises to the cell inner membrane. Its function is as follows. A membrane remodeling protein capable of forming rings and/or filaments on membranes, which then curve and tubulate the bilayer. Rings will form on liposomes, altering their positive curvature so the lipid bilayer is remodeled into a negative curve as the membrane enters the ring. Ring stacks of varying lengths can be seen joining isolated liposomes. A lipid monolayer can be drawn into the center of the rings. Required for thylakoid formation. The sequence is that of Membrane-associated protein Vipp1 from Nostoc punctiforme (strain ATCC 29133 / PCC 73102).